The sequence spans 1383 residues: MGSGRGCETTAVPLLMAVAVAGGTAGHLYPGEVCPGMDIRNNLTRLHELENCSVIEGHLQILLMFKTRPEDFRDLSFPKLIMITDYLLLFRVYGLESLKDLFPNLTVIRGSRLFFNYALVIFEMVHLKELGLYNLMNITRGSVRIEKNNELCYLATIDWSRILDYVEDNYIVLNKDDNEECGDVCPGTAKGKTNCPATVINGQFVERCWTHSHCQKVCPTICKSHGCTAEGLCCHKECLGNCSEPDDPTKCVACRNFYLDGQCVETCPPPYYHFQDWRCVNFSFCQDLHYKCRNSRKPGCHQYVIHNNKCIPECPSGYTMNSSNLMCTPCLGPCPKVCQILEGEKTIDSVTSAQELRGCTVINGSLIINIRGGNNLAAELEANLGLIEEISGFLKIRRSYALVSLSFFRKLHLIRGETLEIGNYSFYALDNQNLRQLWDWNKHNLTITQGKLFFHYNPKLCLSEIHKMEEVSGTKGRQERNDIALKTNGDQASCENELLKFSFIRTSFDKILLRWEPYWPPDFRDLLGFMLFYKEAPYQNVTEFDGQDACGSNSWTVVDIDPPQRSNDPKSQTPSHPGWLMRGLKPWTQYAIFVKTLVTFSDERRTYGAKSDIIYVQTDATNPSVPLDPISVSNSSSQIILKWKPPSDPNGNITHYLVYWERQAEDSELFELDYCLKGLKLPSRTWSPPFESDDSQKHNQSEYDDSASECCSCPKTDSQILKELEESSFRKTFEDYLHNVVFVPRKTSSGNGAEDTRPSRKRRSLEEVGNVTATTPTLPDFPNISSTIAPTSHEEHRPFEKVVNKESLVISGLRHFTGYRIELQACNQDSPEERSGVAAYVSARTMPEAKADDIVGPVTHEIFENNVVHLMWQEPKEPNGLIVLYEVSYRRYGDEELHLCVSRKHFALERGCRLRGLSPGNYSVRVRATSLAGNGSWTEPTYFYVTDYLDVPSNIAKIIIGPLIFVFLFSVVIGSIYLFLRKRQPDGPMGPLYASSNPEYLSASDVFPSSVYVPDEWEVPREKITLLRELGQGSFGMVYEGNAKDIIKGEVETRVAVKTVNESASLRERIEFLNEASVMKGFTCHHVVRLLGVVSKGQPTLVVMELMAHGDLKSHLRSLRPDAENNPGRPPPTLQEMIQMTAEIADGMAYLNAKKFVHRDLAARNCMVAHDFTVKIGDFGMTRDIYETDYYRKGGKGLLPVRWMSPESLKDGVFTASSDMWSFGVVLWEITSLAEQPYQGLSNEQVLKFVMDGGYLDPPDNCPERLTDLMRMCWQFNPKMRPTFLEIVNLLKDDLHPSFPEVSFFYSEENKAPESEELEMEFEDMENVPLDRSSHCQREEAGCREGGSSLSIKRTYDEHIPYTHMNGGKKNGRVLTLPRSNPS.

The N-terminal stretch at 1 to 26 (MGSGRGCETTAVPLLMAVAVAGGTAG) is a signal peptide. Extracellular loops occupy residues 27–759 (HLYP…TRPS) and 764–957 (SLEE…NIAK). Cysteine 34 and cysteine 52 are disulfide-bonded. N-linked (GlcNAc...) asparagine glycans are attached at residues asparagine 42, asparagine 51, asparagine 104, and asparagine 137. 9 disulfides stabilise this stretch: cysteine 152–cysteine 181, cysteine 185–cysteine 208, cysteine 195–cysteine 214, cysteine 218–cysteine 227, cysteine 222–cysteine 233, cysteine 234–cysteine 242, cysteine 238–cysteine 251, cysteine 254–cysteine 263, and cysteine 267–cysteine 279. Asparagine 241 carries N-linked (GlcNAc...) asparagine glycosylation. An N-linked (GlcNAc...) asparagine glycan is attached at asparagine 281. 5 cysteine pairs are disulfide-bonded: cysteine 285–cysteine 310, cysteine 292–cysteine 300, cysteine 314–cysteine 327, cysteine 330–cysteine 334, and cysteine 338–cysteine 359. The N-linked (GlcNAc...) asparagine glycan is linked to asparagine 321. N-linked (GlcNAc...) asparagine glycosylation occurs at asparagine 363. Phosphoserine is present on serine 399. Tyrosine 400 is modified (phosphotyrosine). Phosphoserine is present on serine 406. N-linked (GlcNAc...) asparagine glycosylation is found at asparagine 423 and asparagine 444. Cysteine 461 and cysteine 494 are disulfide-bonded. 4 N-linked (GlcNAc...) asparagine glycosylation sites follow: asparagine 540, asparagine 634, asparagine 652, and asparagine 699. The 103-residue stretch at 625–727 (VPLDPISVSN…SQILKELEES (103 aa)) folds into the Fibronectin type-III 1 domain. A disulfide bridge connects residues cysteine 675 and cysteine 900. Residues 687–709 (SPPFESDDSQKHNQSEYDDSASE) are disordered. An insulin-binding region spans residues 734–742 (EDYLHNVVF). The interval 747–783 (TSSGNGAEDTRPSRKRRSLEEVGNVTATTPTLPDFPN) is disordered. Fibronectin type-III domains follow at residues 754–848 (EDTR…TMPE) and 854–948 (IVGP…VTDY). N-linked (GlcNAc...) asparagine glycosylation is found at asparagine 770, asparagine 783, asparagine 921, and asparagine 934. Residues 771–783 (VTATTPTLPDFPN) show a composition bias toward polar residues. The helical transmembrane segment at 958–978 (IIIGPLIFVFLFSVVIGSIYL) threads the bilayer. The Cytoplasmic segment spans residues 979–1383 (FLRKRQPDGP…VLTLPRSNPS (405 aa)). An important for interaction with IRS1, SHC1 and STAT5B region spans residues 997-1000 (NPEY). The residue at position 1000 (tyrosine 1000) is a Phosphotyrosine; by autocatalysis. Residues 1024 to 1299 (ITLLRELGQG…LLKDDLHPSF (276 aa)) form the Protein kinase domain. ATP contacts are provided by serine 1034 and lysine 1058. Residue lysine 1080 forms a Glycyl lysine isopeptide (Lys-Gly) (interchain with G-Cter in ubiquitin) linkage. Cysteine 1084 is subject to S-nitrosocysteine. 1105–1111 (ELMAHGD) is an ATP binding site. Aspartate 1160 functions as the Proton donor/acceptor in the catalytic mechanism. ATP is bound by residues 1164 to 1165 (RN) and aspartate 1178. Tyrosine 1186, tyrosine 1190, tyrosine 1191, tyrosine 1356, and tyrosine 1362 each carry phosphotyrosine; by autocatalysis. Residues 1361–1383 (PYTHMNGGKKNGRVLTLPRSNPS) form a disordered region. Positions 1362–1365 (YTHM) are PIK3R1 binding.

Belongs to the protein kinase superfamily. Tyr protein kinase family. Insulin receptor subfamily. As to quaternary structure, tetramer of 2 alpha and 2 beta chains linked by disulfide bonds. The alpha chains carry the insulin-binding regions, while the beta chains carry the kinase domain. Forms a hybrid receptor with IGF1R, the hybrid is a tetramer consisting of 1 alpha chain and 1 beta chain of INSR and 1 alpha chain and 1 beta chain of IGF1R. Interacts with SORBS1 but dissociates from it following insulin stimulation. Binds SH2B2. Activated form of INSR interacts (via Tyr-1000) with the PTB/PID domains of IRS1 and SHC1. The sequences surrounding the phosphorylated NPXY motif contribute differentially to either IRS1 or SHC1 recognition. Interacts (via tyrosines in the C-terminus) with IRS2 (via PTB domain and 591-786 AA); the 591-786 would be the primary anchor of IRS2 to INSR while the PTB domain would have a stabilizing action on the interaction with INSR. Interacts with the SH2 domains of the 85 kDa regulatory subunit of PI3K (PIK3R1) in vitro, when autophosphorylated on tyrosine residues. Interacts with SOCS7. Interacts (via the phosphorylated Tyr-1000), with SOCS3. Interacts (via the phosphorylated Tyr-1186, Tyr-1190, Tyr-1191) with SOCS1. Interacts with ARRB2. Interacts with GRB10; this interaction blocks the association between IRS1/IRS2 and INSR, significantly reduces insulin-stimulated tyrosine phosphorylation of IRS1 and IRS2 and thus decreases insulin signaling. Interacts with PDPK1. Interacts (via Tyr-1191) with GRB14 (via BPS domain); this interaction protects the tyrosines in the activation loop from dephosphorylation, but promotes dephosphorylation of Tyr-1000, this results in decreased interaction with, and phosphorylation of, IRS1. Interacts (via subunit alpha) with ENPP1 (via 485-599 AA); this interaction blocks autophosphorylation. Interacts with PTPRE; this interaction is dependent of Tyr-1186, Tyr-1190 and Tyr-1191 of the INSR. Interacts with STAT5B (via SH2 domain). Interacts with PTPRF. Interacts with GRB7. Interacts with CAV2 (tyrosine-phosphorylated form); the interaction is increased with 'Tyr-27'phosphorylation of CAV2. Interacts with ATIC; ATIC together with PRKAA2/AMPK2 and HACD3/PTPLAD1 is proposed to be part of a signaling netwok regulating INSR autophosphorylation and endocytosis. Interacts with the insulin receptor SORL1; this interaction strongly increases its surface exposure, hence strengthens insulin signal reception. Interacts (tyrosine phosphorylated) with CCDC88A/GIV (via SH2-like region); binding requires autophosphorylation of the Insr C-terminal region. Interacts with GNAI3; the interaction is probably mediated by CCDC88A/GIV. Interacts with LMBRD1. Interacts (in response to insulin stimulation) with NCK1; this interaction may recruit PTPN1 to mediate INSR dephosphorylation. Interacts with CD248; this interaction diminishes INSR autophosphorylation. After being transported from the endoplasmic reticulum to the Golgi apparatus, the single glycosylated precursor is further glycosylated and then cleaved, followed by its transport to the plasma membrane. In terms of processing, autophosphorylated on tyrosine residues in response to insulin. Phosphorylation of Tyr-1000 is required for binding to IRS1, SHC1 and STAT5B. May also be phosphorylated at Tyr-1186 and Tyr-1191 by mTORC2. Dephosphorylated by PTPRE at Tyr-1000, Tyr-1186, Tyr-1190 and Tyr-1191. Dephosphorylated by PTPRF and PTPN1. Dephosphorylated by PTPN2; down-regulates insulin-induced signaling. Post-translationally, S-nitrosylation at Cys-1084 by BLVRB inhibits the receptor tyrosine kinase, thereby inhibiting insulin signaling. Ubiquitinated by MARCHF1; leading to degradation thereby reducing surface INSR expression.

Its subcellular location is the cell membrane. The protein resides in the late endosome. It localises to the lysosome. It carries out the reaction L-tyrosyl-[protein] + ATP = O-phospho-L-tyrosyl-[protein] + ADP + H(+). With respect to regulation, activated in response to insulin. Autophosphorylation activates the kinase activity. PTPN1, PTPRE and PTPRF dephosphorylate important tyrosine residues, thereby reducing INSR activity. Inhibited by ENPP1. GRB10 and GRB14 inhibit the catalytic activity of the INSR, they block access of substrates to the activated receptor. SOCS1 and SOCS3 act as negative regulators of INSR activity, they bind to the activated INRS and interfere with the phosphorylation of INSR substrates. In terms of biological role, receptor tyrosine kinase which mediates the pleiotropic actions of insulin. Binding of insulin leads to phosphorylation of several intracellular substrates, including, insulin receptor substrates (IRS1, 2, 3, 4), SHC, GAB1, CBL and other signaling intermediates. Each of these phosphorylated proteins serve as docking proteins for other signaling proteins that contain Src-homology-2 domains (SH2 domain) that specifically recognize different phosphotyrosine residues, including the p85 regulatory subunit of PI3K and SHP2. Phosphorylation of IRSs proteins lead to the activation of two main signaling pathways: the PI3K-AKT/PKB pathway, which is responsible for most of the metabolic actions of insulin, and the Ras-MAPK pathway, which regulates expression of some genes and cooperates with the PI3K pathway to control cell growth and differentiation. Binding of the SH2 domains of PI3K to phosphotyrosines on IRS1 leads to the activation of PI3K and the generation of phosphatidylinositol-(3, 4, 5)-triphosphate (PIP3), a lipid second messenger, which activates several PIP3-dependent serine/threonine kinases, such as PDPK1 and subsequently AKT/PKB. The net effect of this pathway is to produce a translocation of the glucose transporter SLC2A4/GLUT4 from cytoplasmic vesicles to the cell membrane to facilitate glucose transport. Moreover, upon insulin stimulation, activated AKT/PKB is responsible for: anti-apoptotic effect of insulin by inducing phosphorylation of BAD; regulates the expression of gluconeogenic and lipogenic enzymes by controlling the activity of the winged helix or forkhead (FOX) class of transcription factors. Another pathway regulated by PI3K-AKT/PKB activation is mTORC1 signaling pathway which regulates cell growth and metabolism and integrates signals from insulin. AKT mediates insulin-stimulated protein synthesis by phosphorylating TSC2 thereby activating mTORC1 pathway. The Ras/RAF/MAP2K/MAPK pathway is mainly involved in mediating cell growth, survival and cellular differentiation of insulin. Phosphorylated IRS1 recruits GRB2/SOS complex, which triggers the activation of the Ras/RAF/MAP2K/MAPK pathway. In addition to binding insulin, the insulin receptor can bind insulin-like growth factors (IGFI and IGFII). When present in a hybrid receptor with IGF1R, binds IGF1. In adipocytes, inhibits lipolysis. In Rattus norvegicus (Rat), this protein is Insulin receptor (Insr).